Here is a 358-residue protein sequence, read N- to C-terminus: DNA polymerase IV (358 aa).

A UmuC domain is found at 4 to 185 (IIHIDMDCYF…LSLRKIPGVG (182 aa)). Mg(2+) is bound by residues aspartate 8 and aspartate 103. The active site involves glutamate 104.

This sequence belongs to the DNA polymerase type-Y family. In terms of assembly, monomer. The cofactor is Mg(2+).

It is found in the cytoplasm. It carries out the reaction DNA(n) + a 2'-deoxyribonucleoside 5'-triphosphate = DNA(n+1) + diphosphate. Poorly processive, error-prone DNA polymerase involved in untargeted mutagenesis. Copies undamaged DNA at stalled replication forks, which arise in vivo from mismatched or misaligned primer ends. These misaligned primers can be extended by PolIV. Exhibits no 3'-5' exonuclease (proofreading) activity. May be involved in translesional synthesis, in conjunction with the beta clamp from PolIII. The polypeptide is DNA polymerase IV (Shewanella sp. (strain W3-18-1)).